A 122-amino-acid chain; its full sequence is Large ribosomal subunit protein uL14 (122 aa).

It belongs to the universal ribosomal protein uL14 family. In terms of assembly, part of the 50S ribosomal subunit. Forms a cluster with proteins L3 and L19. In the 70S ribosome, L14 and L19 interact and together make contacts with the 16S rRNA in bridges B5 and B8.

Binds to 23S rRNA. Forms part of two intersubunit bridges in the 70S ribosome. This Nostoc punctiforme (strain ATCC 29133 / PCC 73102) protein is Large ribosomal subunit protein uL14.